The chain runs to 85 residues: RNA-binding protein Hfq (85 aa).

The region spanning 11 to 71 is the Sm domain; the sequence is DTFLNHVRKS…ISTIMPGHPV (61 aa).

This sequence belongs to the Hfq family. Homohexamer.

Functionally, RNA chaperone that binds small regulatory RNA (sRNAs) and mRNAs to facilitate mRNA translational regulation in response to envelope stress, environmental stress and changes in metabolite concentrations. Also binds with high specificity to tRNAs. Seems to be involved in the regulation of NifA. This is RNA-binding protein Hfq from Azorhizobium caulinodans (strain ATCC 43989 / DSM 5975 / JCM 20966 / LMG 6465 / NBRC 14845 / NCIMB 13405 / ORS 571).